Reading from the N-terminus, the 174-residue chain is Guided entry of tail-anchored proteins factor 1 (174 aa).

The Lumenal portion of the chain corresponds to 1-8; that stretch reads MSASETDR. Residues 9-29 traverse the membrane as a helical segment; that stretch reads WAWLLVLSFVFGCNLLRILLP. Over 30 to 99 the chain is Cytoplasmic; it reads SLSSFISRVL…VKARTAQLAK (70 aa). Residues 39–94 adopt a coiled-coil conformation; the sequence is LQKDAEQESQMRAEIQGMKQELSTVNMMDEFARYARLERKINKMTDKLKTHVKART. An interaction with GET3/TRC40 region spans residues 39 to 97; the sequence is LQKDAEQESQMRAEIQGMKQELSTVNMMDEFARYARLERKINKMTDKLKTHVKARTAQL. A helical transmembrane segment spans residues 100 to 120; the sequence is IKWFISVAFYILQAALMISLI. Topologically, residues 121–148 are lumenal; that stretch reads WKYYSVPVAVVPSKWITPLDRLVAFPTR. Residues 149–169 traverse the membrane as a helical segment; that stretch reads VAGGIGITCWILVCNKVVAIV. Residues 170 to 174 are Cytoplasmic-facing; the sequence is LHPFS.

Belongs to the WRB/GET1 family. As to quaternary structure, component of the Golgi to ER traffic (GET) complex, which is composed of GET1, CAMLG/GET2 and GET3. Within the complex, GET1 and CAMLG form a heterotetramer which is stabilized by phosphatidylinositol binding and which binds to the GET3 homodimer. Interacts with CAMLG/GET2 (via C-terminus). GET3 shows a higher affinity for CAMLG than for GET1.

It localises to the endoplasmic reticulum membrane. In terms of biological role, required for the post-translational delivery of tail-anchored (TA) proteins to the endoplasmic reticulum. Together with CAMLG/GET2, acts as a membrane receptor for soluble GET3/TRC40, which recognizes and selectively binds the transmembrane domain of TA proteins in the cytosol. Required to ensure correct topology and ER insertion of CAMLG. The polypeptide is Guided entry of tail-anchored proteins factor 1 (Mus musculus (Mouse)).